The following is a 512-amino-acid chain: Ribonuclease Y (512 aa).

The helical transmembrane segment at 3 to 23 threads the bilayer; sequence FQIILVVIISALVGLVIGFFI. Residues 202-265 enclose the KH domain; it reads TVAVIPLPND…EVARLALERL (64 aa). Residues 328 to 421 form the HD domain; the sequence is VLKHSIEVCH…VQAADAISAA (94 aa).

Belongs to the RNase Y family.

It is found in the cell membrane. Its function is as follows. Endoribonuclease that initiates mRNA decay. In Desulforamulus reducens (strain ATCC BAA-1160 / DSM 100696 / MI-1) (Desulfotomaculum reducens), this protein is Ribonuclease Y.